The following is a 115-amino-acid chain: NAD(P)H-quinone oxidoreductase subunit M (115 aa).

It belongs to the complex I NdhM subunit family. NDH-1 can be composed of about 15 different subunits; different subcomplexes with different compositions have been identified which probably have different functions.

It localises to the cellular thylakoid membrane. It carries out the reaction a plastoquinone + NADH + (n+1) H(+)(in) = a plastoquinol + NAD(+) + n H(+)(out). It catalyses the reaction a plastoquinone + NADPH + (n+1) H(+)(in) = a plastoquinol + NADP(+) + n H(+)(out). NDH-1 shuttles electrons from an unknown electron donor, via FMN and iron-sulfur (Fe-S) centers, to quinones in the respiratory and/or the photosynthetic chain. The immediate electron acceptor for the enzyme in this species is believed to be plastoquinone. Couples the redox reaction to proton translocation, and thus conserves the redox energy in a proton gradient. Cyanobacterial NDH-1 also plays a role in inorganic carbon-concentration. In Synechococcus sp. (strain WH7803), this protein is NAD(P)H-quinone oxidoreductase subunit M.